We begin with the raw amino-acid sequence, 87 residues long: Small ribosomal subunit protein bS20 (87 aa).

Residues 1-22 (MANSAQARKRARQSLKARAHNA) are disordered. Basic residues predominate over residues 7–19 (ARKRARQSLKARA).

Belongs to the bacterial ribosomal protein bS20 family.

Functionally, binds directly to 16S ribosomal RNA. The sequence is that of Small ribosomal subunit protein bS20 from Laribacter hongkongensis (strain HLHK9).